The sequence spans 258 residues: MKITKLEKKKRLYLMELDGQQTSYITEDTIVRFMLSRDKVISKEELTEIQDFAQFSYGKNLALYHLSFKARTEKEVREYLKKYDIDKNIVSQVIANLKEDKWINDGQYAYAIINTNQLSGDKGPYVLTQKLAQKGISKSTIEENLKEFDFSEVAQRVANKLLKKYEGKLPSRALQDKIIQNLTNKGFSYSDAKIAFDDLDSQVDQETTQELIFKELDKQYSKYARKYEGYELKQRLTQVLARKGYDFSDIASALREYL.

The protein belongs to the RecX family.

The protein localises to the cytoplasm. Functionally, modulates RecA activity. The sequence is that of Regulatory protein RecX from Streptococcus pneumoniae (strain P1031).